A 544-amino-acid polypeptide reads, in one-letter code: Chaperonin GroEL (544 aa).

ATP-binding positions include 30 to 33, Lys-51, 87 to 91, Gly-415, 479 to 481, and Asp-495; these read TLGP, DGTTT, and NAA.

Belongs to the chaperonin (HSP60) family. As to quaternary structure, forms a cylinder of 14 subunits composed of two heptameric rings stacked back-to-back. Interacts with the co-chaperonin GroES.

Its subcellular location is the cytoplasm. The catalysed reaction is ATP + H2O + a folded polypeptide = ADP + phosphate + an unfolded polypeptide.. Together with its co-chaperonin GroES, plays an essential role in assisting protein folding. The GroEL-GroES system forms a nano-cage that allows encapsulation of the non-native substrate proteins and provides a physical environment optimized to promote and accelerate protein folding. This chain is Chaperonin GroEL, found in Acinetobacter baumannii (strain AB307-0294).